The following is a 52-amino-acid chain: ATP synthase F(0) complex subunit 8 (52 aa).

The helical transmembrane segment at 10 to 30 (LMTHLWAWLMLYLTTQKIKTF) threads the bilayer.

It belongs to the ATPase protein 8 family. Component of the ATP synthase complex composed at least of ATP5F1A/subunit alpha, ATP5F1B/subunit beta, ATP5MC1/subunit c (homooctomer), MT-ATP6/subunit a, MT-ATP8/subunit 8, ATP5ME/subunit e, ATP5MF/subunit f, ATP5MG/subunit g, ATP5MK/subunit k, ATP5MJ/subunit j, ATP5F1C/subunit gamma, ATP5F1D/subunit delta, ATP5F1E/subunit epsilon, ATP5PF/subunit F6, ATP5PB/subunit b, ATP5PD/subunit d, ATP5PO/subunit OSCP. ATP synthase complex consists of a soluble F(1) head domain (subunits alpha(3) and beta(3)) - the catalytic core - and a membrane F(0) domain - the membrane proton channel (subunits c, a, 8, e, f, g, k and j). These two domains are linked by a central stalk (subunits gamma, delta, and epsilon) rotating inside the F1 region and a stationary peripheral stalk (subunits F6, b, d, and OSCP).

The protein resides in the mitochondrion membrane. Its function is as follows. Subunit 8, of the mitochondrial membrane ATP synthase complex (F(1)F(0) ATP synthase or Complex V) that produces ATP from ADP in the presence of a proton gradient across the membrane which is generated by electron transport complexes of the respiratory chain. ATP synthase complex consist of a soluble F(1) head domain - the catalytic core - and a membrane F(1) domain - the membrane proton channel. These two domains are linked by a central stalk rotating inside the F(1) region and a stationary peripheral stalk. During catalysis, ATP synthesis in the catalytic domain of F(1) is coupled via a rotary mechanism of the central stalk subunits to proton translocation. In vivo, can only synthesize ATP although its ATP hydrolase activity can be activated artificially in vitro. Part of the complex F(0) domain. The polypeptide is ATP synthase F(0) complex subunit 8 (Lycodon semicarinatus (Ryukyu odd-tooth snake)).